We begin with the raw amino-acid sequence, 493 residues long: MDTPTPNITNEALTVRGKERYRSGVLEYRKMGYWEPDYEPKITDVISLFRITPQDGVDPVEAAAAVAGESSTATWTVVWTDRLTACEKYRAKAYRVDPVPNAPGQYFAYIAYDLALFEPGSIANLTASIIGNVFGFKPLKALRLEDMRLPVAYVKTFDGPATGIVVERERLDKFGRPLLGATVKPKLGLSGRNYGRVVYEALKGGLDFTKDDENINSQPFMHWRDRFLYCMEAVNKAQAATGEVKGTYLNVTAGTMEDMYERASFAHELGSSIIMIDLVIGYTAIQSMSKWARKHDMILHLHRAGHGTYTRHKTHGVSFRVISKWMRLAGVDHIHAGTVVGKLEGDPLTTRGFYDILREDYNETRYEHGIFFDQDWAGTRKVMPVASGGIHAGQMHQLLHHLGEDVVLQFGGGTIGHPQGIAAGAMANRVALEAMILARNEGRDYLAEGPQILNDAARHCLPLRQALDTWGEVTFNYASTDTPDFVPTAMPAY.

Substrate is bound by residues Asn132 and Thr182. Residue Lys184 is the Proton acceptor of the active site. Lys186 provides a ligand contact to substrate. Mg(2+)-binding residues include Lys210, Asp212, and Glu213. Position 210 is an N6-carboxylysine (Lys210). His302 serves as the catalytic Proton acceptor. 3 residues coordinate substrate: Arg303, His335, and Ser387.

It belongs to the RuBisCO large chain family. Type I subfamily. In terms of assembly, heterohexadecamer of 8 large chains and 8 small chains. Requires Mg(2+) as cofactor.

It catalyses the reaction 2 (2R)-3-phosphoglycerate + 2 H(+) = D-ribulose 1,5-bisphosphate + CO2 + H2O. It carries out the reaction D-ribulose 1,5-bisphosphate + O2 = 2-phosphoglycolate + (2R)-3-phosphoglycerate + 2 H(+). Its function is as follows. RuBisCO catalyzes two reactions: the carboxylation of D-ribulose 1,5-bisphosphate, the primary event in carbon dioxide fixation, as well as the oxidative fragmentation of the pentose substrate. Both reactions occur simultaneously and in competition at the same active site. The polypeptide is Ribulose bisphosphate carboxylase large chain (Acidiphilium cryptum (strain JF-5)).